The sequence spans 193 residues: Adenine phosphoribosyltransferase (193 aa).

This sequence belongs to the purine/pyrimidine phosphoribosyltransferase family. Homodimer.

Its subcellular location is the cytoplasm. It catalyses the reaction AMP + diphosphate = 5-phospho-alpha-D-ribose 1-diphosphate + adenine. It functions in the pathway purine metabolism; AMP biosynthesis via salvage pathway; AMP from adenine: step 1/1. Functionally, catalyzes a salvage reaction resulting in the formation of AMP, that is energically less costly than de novo synthesis. The chain is Adenine phosphoribosyltransferase from Chromobacterium violaceum (strain ATCC 12472 / DSM 30191 / JCM 1249 / CCUG 213 / NBRC 12614 / NCIMB 9131 / NCTC 9757 / MK).